Here is a 376-residue protein sequence, read N- to C-terminus: Queuine tRNA-ribosyltransferase (376 aa).

Asp-89 (proton acceptor) is an active-site residue. Substrate is bound by residues 89–93, Asp-143, Gln-194, and Gly-221; that span reads DSGGF. The segment at 252 to 258 is RNA binding; it reads GVGIPSN. The active-site Nucleophile is Asp-271. Residues 276–280 are RNA binding; important for wobble base 34 recognition; that stretch reads ARNGR. Residues Cys-309, Cys-311, Cys-314, and His-340 each contribute to the Zn(2+) site.

The protein belongs to the queuine tRNA-ribosyltransferase family. In terms of assembly, homodimer. Within each dimer, one monomer is responsible for RNA recognition and catalysis, while the other monomer binds to the replacement base PreQ1. Zn(2+) is required as a cofactor.

It carries out the reaction 7-aminomethyl-7-carbaguanine + guanosine(34) in tRNA = 7-aminomethyl-7-carbaguanosine(34) in tRNA + guanine. It participates in tRNA modification; tRNA-queuosine biosynthesis. Functionally, catalyzes the base-exchange of a guanine (G) residue with the queuine precursor 7-aminomethyl-7-deazaguanine (PreQ1) at position 34 (anticodon wobble position) in tRNAs with GU(N) anticodons (tRNA-Asp, -Asn, -His and -Tyr). Catalysis occurs through a double-displacement mechanism. The nucleophile active site attacks the C1' of nucleotide 34 to detach the guanine base from the RNA, forming a covalent enzyme-RNA intermediate. The proton acceptor active site deprotonates the incoming PreQ1, allowing a nucleophilic attack on the C1' of the ribose to form the product. After dissociation, two additional enzymatic reactions on the tRNA convert PreQ1 to queuine (Q), resulting in the hypermodified nucleoside queuosine (7-(((4,5-cis-dihydroxy-2-cyclopenten-1-yl)amino)methyl)-7-deazaguanosine). This is Queuine tRNA-ribosyltransferase from Clostridium botulinum (strain Hall / ATCC 3502 / NCTC 13319 / Type A).